A 215-amino-acid polypeptide reads, in one-letter code: Pyridoxine/pyridoxamine 5'-phosphate oxidase (215 aa).

Substrate-binding positions include 9–12 (RRDY) and Lys-69. Residues 64-69 (RVLLLK), 79-80 (FT), Lys-86, and Gln-108 each bind FMN. Positions 126, 130, and 134 each coordinate substrate. FMN contacts are provided by residues 143 to 144 (QS) and Trp-188. 194 to 196 (RLH) is a substrate binding site. Arg-198 contacts FMN.

It belongs to the pyridoxamine 5'-phosphate oxidase family. In terms of assembly, homodimer. The cofactor is FMN.

It catalyses the reaction pyridoxamine 5'-phosphate + O2 + H2O = pyridoxal 5'-phosphate + H2O2 + NH4(+). The catalysed reaction is pyridoxine 5'-phosphate + O2 = pyridoxal 5'-phosphate + H2O2. Its pathway is cofactor metabolism; pyridoxal 5'-phosphate salvage; pyridoxal 5'-phosphate from pyridoxamine 5'-phosphate: step 1/1. It functions in the pathway cofactor metabolism; pyridoxal 5'-phosphate salvage; pyridoxal 5'-phosphate from pyridoxine 5'-phosphate: step 1/1. Catalyzes the oxidation of either pyridoxine 5'-phosphate (PNP) or pyridoxamine 5'-phosphate (PMP) into pyridoxal 5'-phosphate (PLP). In Pseudomonas putida (strain W619), this protein is Pyridoxine/pyridoxamine 5'-phosphate oxidase.